The chain runs to 178 residues: Probable DNA-directed RNA polymerase subunit delta (178 aa).

Positions 14 to 81 constitute an HTH HARE-type domain; it reads KSFIDMAYTL…GENLWGLRDW (68 aa). Residues 114–178 form a disordered region; sequence LGDDDADEDD…AFEDAEDFND (65 aa). Residues 116-178 are compositionally biased toward acidic residues; sequence DDDADEDDDI…AFEDAEDFND (63 aa).

This sequence belongs to the RpoE family. As to quaternary structure, RNAP is composed of a core of 2 alpha, a beta and a beta' subunits. The core is associated with a delta subunit and one of several sigma factors.

Its function is as follows. Participates in both the initiation and recycling phases of transcription. In the presence of the delta subunit, RNAP displays an increased specificity of transcription, a decreased affinity for nucleic acids, and an increased efficiency of RNA synthesis because of enhanced recycling. The protein is Probable DNA-directed RNA polymerase subunit delta of Staphylococcus epidermidis (strain ATCC 35984 / DSM 28319 / BCRC 17069 / CCUG 31568 / BM 3577 / RP62A).